Here is a 433-residue protein sequence, read N- to C-terminus: Divalent metal cation transporter MntH (433 aa).

The next 11 helical transmembrane spans lie at 32–52, 62–82, 101–121, 131–151, 168–188, 209–229, 256–276, 296–316, 345–365, 366–386, and 401–421; these read LIFAGPAVVASIAYMDPGNFA, GYDLLWVVLLASLIAMLFQGL, TLPPALTIPMWIISEIAAMAT, IGIALLAHLPLMAGMAITGIV, LVIGALVGVIALCYLAELLIV, ALTIAVGIVGATVMPHALFLH, VLAALGVAGMVNMAMVAMAAG, SPLLGAGAAVIFLISLLASGV, ALTMIPGFVVIGLGVNPTRAL, VLSQVVLSLALPVPMLALLWF, and ITAIAAIGGAIVILGLNVILL.

This sequence belongs to the NRAMP family.

The protein resides in the cell inner membrane. Functionally, h(+)-stimulated, divalent metal cation uptake system. The polypeptide is Divalent metal cation transporter MntH (Acidiphilium cryptum (strain JF-5)).